Here is a 375-residue protein sequence, read N- to C-terminus: Chaperone protein DnaJ (375 aa).

Residues 5–70 (DYYDVLGVNR…QKRGAYDQFG (66 aa)) enclose the J domain. Residues 135 to 213 (GCEKQIRIPS…CHGAGQKKTT (79 aa)) form a CR-type zinc finger. Residues Cys148, Cys151, Cys165, Cys168, Cys187, Cys190, Cys201, and Cys204 each coordinate Zn(2+). CXXCXGXG motif repeat units follow at residues 148-155 (CSTCNGTG), 165-172 (CATCGGHG), 187-194 (CPTCHGTG), and 201-208 (CGSCHGAG).

It belongs to the DnaJ family. Homodimer. Requires Zn(2+) as cofactor.

The protein localises to the cytoplasm. Participates actively in the response to hyperosmotic and heat shock by preventing the aggregation of stress-denatured proteins and by disaggregating proteins, also in an autonomous, DnaK-independent fashion. Unfolded proteins bind initially to DnaJ; upon interaction with the DnaJ-bound protein, DnaK hydrolyzes its bound ATP, resulting in the formation of a stable complex. GrpE releases ADP from DnaK; ATP binding to DnaK triggers the release of the substrate protein, thus completing the reaction cycle. Several rounds of ATP-dependent interactions between DnaJ, DnaK and GrpE are required for fully efficient folding. Also involved, together with DnaK and GrpE, in the DNA replication of plasmids through activation of initiation proteins. The chain is Chaperone protein DnaJ from Chromobacterium violaceum (strain ATCC 12472 / DSM 30191 / JCM 1249 / CCUG 213 / NBRC 12614 / NCIMB 9131 / NCTC 9757 / MK).